Reading from the N-terminus, the 186-residue chain is Ribosome-recycling factor (186 aa).

This sequence belongs to the RRF family.

The protein resides in the cytoplasm. In terms of biological role, responsible for the release of ribosomes from messenger RNA at the termination of protein biosynthesis. May increase the efficiency of translation by recycling ribosomes from one round of translation to another. The chain is Ribosome-recycling factor from Burkholderia mallei (strain NCTC 10247).